The following is a 50-amino-acid chain: Protein hunchback (50 aa).

C2H2-type zinc fingers lie at residues 1–5, 11–33, and 39–50; these read HLRNH, FKCG…MKSH, and YRCANCCYATKY.

It belongs to the hunchback C2H2-type zinc-finger protein family.

The protein localises to the nucleus. Gap class segmentation protein that controls development of head structures. The sequence is that of Protein hunchback (hb) from Pholcus phalangioides (Longbodied cellar spider).